A 190-amino-acid polypeptide reads, in one-letter code: ATP synthase subunit b, chloroplastic (190 aa).

Residues 35–55 (LSVVLGVLIFFGKGVCASCLL) form a helical membrane-spanning segment.

The protein belongs to the ATPase B chain family. As to quaternary structure, F-type ATPases have 2 components, F(1) - the catalytic core - and F(0) - the membrane proton channel. F(1) has five subunits: alpha(3), beta(3), gamma(1), delta(1), epsilon(1). F(0) has four main subunits: a(1), b(1), b'(1) and c(10-14). The alpha and beta chains form an alternating ring which encloses part of the gamma chain. F(1) is attached to F(0) by a central stalk formed by the gamma and epsilon chains, while a peripheral stalk is formed by the delta, b and b' chains.

It is found in the plastid. Its subcellular location is the chloroplast thylakoid membrane. Its function is as follows. F(1)F(0) ATP synthase produces ATP from ADP in the presence of a proton or sodium gradient. F-type ATPases consist of two structural domains, F(1) containing the extramembraneous catalytic core and F(0) containing the membrane proton channel, linked together by a central stalk and a peripheral stalk. During catalysis, ATP synthesis in the catalytic domain of F(1) is coupled via a rotary mechanism of the central stalk subunits to proton translocation. Component of the F(0) channel, it forms part of the peripheral stalk, linking F(1) to F(0). The protein is ATP synthase subunit b, chloroplastic of Coffea arabica (Arabian coffee).